Here is a 199-residue protein sequence, read N- to C-terminus: Twist-related protein (199 aa).

The tract at residues 1–43 is disordered; that stretch reads MQEHQLSRVTSGNKKKYQSFDDESRDEKRMKCDSTDKLESNSN. The segment covering 25–39 has biased composition (basic and acidic residues); that stretch reads RDEKRMKCDSTDKLE. A bHLH domain is found at 51–102; the sequence is THRVIANIRERQRTQALNQSFSTLRKIIPTLPSDKLSKIQTLRLAAMYIDFL.

Efficient DNA binding requires dimerization with another bHLH protein. Homodimer. In terms of tissue distribution, expression is seen at the point of medusa formation in the ectodermal and endodermal bud tissues, and in the entocodon which gives rise to all smooth and striated muscle cells. After the subumbrellar plate differentiates from the endoderm, strong expression is detected until the medusa detaches from the gonzoid. Expression is observed in the distal part of the medusa but diminishes in entocodon-derived muscles as the tissues differentiate, with expression disappearing completely after stage 8. In later stages expression is seen in the distal and proximal parts of the bud and depending on state of maturity, in the developing gonadal tissue.

Its subcellular location is the nucleus. Its function is as follows. Probable transcription factor, which may be responsible for the formation of myoepithelial cells in early muscle development in larva and the formation of non-muscle tissues in later bud stages and mesoderm-like structures in the medusa. In Podocoryna carnea (Hydrozoan), this protein is Twist-related protein.